The following is a 548-amino-acid chain: tRNA (guanine(26)-N(2))-dimethyltransferase (548 aa).

One can recognise a Trm1 methyltransferase domain in the interval 30 to 470 (ASLTEGSAII…APWSFVWDVL (441 aa)). S-adenosyl-L-methionine is bound by residues Arg-57, Arg-137, Asp-155, and Ala-186. Cys-317, Cys-320, Cys-354, and Cys-357 together coordinate Zn(2+). The segment at 523-548 (QMNPTENWGPKSKPGKRTIAEVDSKS) is disordered.

The protein belongs to the class I-like SAM-binding methyltransferase superfamily. Trm1 family.

The protein localises to the mitochondrion. It localises to the nucleus. The protein resides in the cytoplasm. It carries out the reaction guanosine(26) in tRNA + 2 S-adenosyl-L-methionine = N(2)-dimethylguanosine(26) in tRNA + 2 S-adenosyl-L-homocysteine + 2 H(+). In terms of biological role, dimethylates a single guanine residue at position 26 of nuclear- and mitochondrial-encoded tRNAs using S-adenosyl-L-methionine as donor of the methyl groups. Also has tRNA strand annealing and dissociation activity independently of its tRNA guanine-dimethyltransferase activity. This is tRNA (guanine(26)-N(2))-dimethyltransferase from Schizosaccharomyces pombe (strain 972 / ATCC 24843) (Fission yeast).